The sequence spans 178 residues: Large ribosomal subunit protein uL6 (178 aa).

It belongs to the universal ribosomal protein uL6 family. In terms of assembly, part of the 50S ribosomal subunit.

Its function is as follows. This protein binds to the 23S rRNA, and is important in its secondary structure. It is located near the subunit interface in the base of the L7/L12 stalk, and near the tRNA binding site of the peptidyltransferase center. The protein is Large ribosomal subunit protein uL6 of Staphylococcus carnosus (strain TM300).